The primary structure comprises 159 residues: Alpha-lactalbumin (159 aa).

The N-terminal stretch at 1–19 (MMRFVPLFLACISLPAFQA) is a signal peptide. Residues 20–142 (TEFTKCEVSH…KLEQWRCEKP (123 aa)) enclose the C-type lysozyme domain. 4 cysteine pairs are disulfide-bonded: cysteine 25-cysteine 139, cysteine 47-cysteine 130, cysteine 80-cysteine 96, and cysteine 92-cysteine 110. The N-linked (GlcNAc...) asparagine glycan is linked to asparagine 64. Ca(2+) contacts are provided by lysine 98, aspartate 101, aspartate 106, and aspartate 107.

This sequence belongs to the glycosyl hydrolase 22 family. In terms of assembly, lactose synthase (LS) is a heterodimer of a catalytic component, beta1,4-galactosyltransferase (beta4Gal-T1) and a regulatory component, alpha-lactalbumin (LA). Mammary gland specific. Secreted in milk.

Its subcellular location is the secreted. Regulatory subunit of lactose synthase, changes the substrate specificity of galactosyltransferase in the mammary gland making glucose a good acceptor substrate for this enzyme. This enables LS to synthesize lactose, the major carbohydrate component of milk. In other tissues, galactosyltransferase transfers galactose onto the N-acetylglucosamine of the oligosaccharide chains in glycoproteins. This chain is Alpha-lactalbumin (Lalba), found in Rattus norvegicus (Rat).